We begin with the raw amino-acid sequence, 557 residues long: CTP synthase (557 aa).

Residues 1 to 270 (MTKYVFVTGG…DAIICEELKL (270 aa)) form an amidoligase domain region. Residue serine 13 participates in CTP binding. A UTP-binding site is contributed by serine 13. Residues 14-19 (SLGKGI) and aspartate 71 contribute to the ATP site. Mg(2+)-binding residues include aspartate 71 and glutamate 144. Residues 151 to 153 (DIE), 191 to 196 (KTKPTQ), and lysine 227 contribute to the CTP site. Residues 191-196 (KTKPTQ) and lysine 227 contribute to the UTP site. The Glutamine amidotransferase type-1 domain maps to 295 to 547 (TIGMVGKYVD…VEAALAHHEA (253 aa)). Glycine 356 is an L-glutamine binding site. Cysteine 383 acts as the Nucleophile; for glutamine hydrolysis in catalysis. Residues 384–387 (LGMQ), glutamate 407, and arginine 473 each bind L-glutamine. Residues histidine 520 and glutamate 522 contribute to the active site.

It belongs to the CTP synthase family. In terms of assembly, homotetramer.

It catalyses the reaction UTP + L-glutamine + ATP + H2O = CTP + L-glutamate + ADP + phosphate + 2 H(+). The enzyme catalyses L-glutamine + H2O = L-glutamate + NH4(+). It carries out the reaction UTP + NH4(+) + ATP = CTP + ADP + phosphate + 2 H(+). The protein operates within pyrimidine metabolism; CTP biosynthesis via de novo pathway; CTP from UDP: step 2/2. Its activity is regulated as follows. Allosterically activated by GTP, when glutamine is the substrate; GTP has no effect on the reaction when ammonia is the substrate. The allosteric effector GTP functions by stabilizing the protein conformation that binds the tetrahedral intermediate(s) formed during glutamine hydrolysis. Inhibited by the product CTP, via allosteric rather than competitive inhibition. Its function is as follows. Catalyzes the ATP-dependent amination of UTP to CTP with either L-glutamine or ammonia as the source of nitrogen. Regulates intracellular CTP levels through interactions with the four ribonucleotide triphosphates. In Paraburkholderia phytofirmans (strain DSM 17436 / LMG 22146 / PsJN) (Burkholderia phytofirmans), this protein is CTP synthase.